Reading from the N-terminus, the 392-residue chain is Cobalt-precorrin-5B C(1)-methyltransferase (392 aa).

The protein belongs to the CbiD family.

It catalyses the reaction Co-precorrin-5B + S-adenosyl-L-methionine = Co-precorrin-6A + S-adenosyl-L-homocysteine. The protein operates within cofactor biosynthesis; adenosylcobalamin biosynthesis; cob(II)yrinate a,c-diamide from sirohydrochlorin (anaerobic route): step 6/10. Functionally, catalyzes the methylation of C-1 in cobalt-precorrin-5B to form cobalt-precorrin-6A. The chain is Cobalt-precorrin-5B C(1)-methyltransferase from Pelobacter propionicus (strain DSM 2379 / NBRC 103807 / OttBd1).